Here is a 159-residue protein sequence, read N- to C-terminus: Ethylene-responsive transcription factor ERF069 (159 aa).

2 disordered regions span residues 1–36 (MKRI…KKLV) and 128–159 (DAPT…EEVV). Residues 74 to 134 (KFRGVRQRPW…IGPDAPTNFG (61 aa)) constitute a DNA-binding region (AP2/ERF). Basic and acidic residues predominate over residues 136-148 (PDVDSAVVKKQDS).

The protein belongs to the AP2/ERF transcription factor family. ERF subfamily.

It localises to the nucleus. Functionally, probably acts as a transcriptional activator. Binds to the GCC-box pathogenesis-related promoter element. May be involved in the regulation of gene expression by stress factors and by components of stress signal transduction pathways. In Arabidopsis thaliana (Mouse-ear cress), this protein is Ethylene-responsive transcription factor ERF069 (ERF069).